The following is a 472-amino-acid chain: Phenylalanine--tRNA ligase, mitochondrial (472 aa).

Residues serine 157–glutamine 160, arginine 179, glutamine 186–tyrosine 188, and glutamine 193–glutamate 195 each bind substrate. The residue at position 202 (lysine 202) is an N6-acetyllysine. 2 residues coordinate substrate: glutamate 287 and phenylalanine 312. The FDX-ACB domain maps to serine 379–arginine 471.

Belongs to the class-II aminoacyl-tRNA synthetase family. Monomer. In terms of tissue distribution, mainly expressed in the Purkinje cell of cerebellum.

The protein resides in the mitochondrion matrix. The protein localises to the mitochondrion. It carries out the reaction tRNA(Phe) + L-phenylalanine + ATP = L-phenylalanyl-tRNA(Phe) + AMP + diphosphate + H(+). Is responsible for the charging of tRNA(Phe) with phenylalanine in mitochondrial translation. To a lesser extent, also catalyzes direct attachment of m-Tyr (an oxidized version of Phe) to tRNA(Phe), thereby opening the way for delivery of the misacylated tRNA to the ribosome and incorporation of ROS-damaged amino acid into proteins. The protein is Phenylalanine--tRNA ligase, mitochondrial (Fars2) of Rattus norvegicus (Rat).